We begin with the raw amino-acid sequence, 212 residues long: Uridine kinase (212 aa).

13–20 provides a ligand contact to ATP; the sequence is GASASGKS.

This sequence belongs to the uridine kinase family.

It is found in the cytoplasm. The enzyme catalyses uridine + ATP = UMP + ADP + H(+). It carries out the reaction cytidine + ATP = CMP + ADP + H(+). Its pathway is pyrimidine metabolism; CTP biosynthesis via salvage pathway; CTP from cytidine: step 1/3. It participates in pyrimidine metabolism; UMP biosynthesis via salvage pathway; UMP from uridine: step 1/1. In Shewanella oneidensis (strain ATCC 700550 / JCM 31522 / CIP 106686 / LMG 19005 / NCIMB 14063 / MR-1), this protein is Uridine kinase.